A 202-amino-acid polypeptide reads, in one-letter code: Peptidyl-tRNA hydrolase (202 aa).

Tyr19 lines the tRNA pocket. Residue His24 is the Proton acceptor of the active site. Positions 70, 72, and 118 each coordinate tRNA.

Belongs to the PTH family. In terms of assembly, monomer.

The protein resides in the cytoplasm. The catalysed reaction is an N-acyl-L-alpha-aminoacyl-tRNA + H2O = an N-acyl-L-amino acid + a tRNA + H(+). Hydrolyzes ribosome-free peptidyl-tRNAs (with 1 or more amino acids incorporated), which drop off the ribosome during protein synthesis, or as a result of ribosome stalling. In terms of biological role, catalyzes the release of premature peptidyl moieties from peptidyl-tRNA molecules trapped in stalled 50S ribosomal subunits, and thus maintains levels of free tRNAs and 50S ribosomes. The chain is Peptidyl-tRNA hydrolase from Prochlorococcus marinus (strain NATL2A).